The chain runs to 167 residues: Aphrodisin (167 aa).

The signal sequence occupies residues 1–16; it reads MVKILLLALVFSLAHA. Residue Gln17 is modified to Pyrrolidone carboxylic acid. 2 disulfides stabilise this stretch: Cys54–Cys58 and Cys73–Cys165. 2 N-linked (GlcNAc...) asparagine glycosylation sites follow: Asn57 and Asn85.

The protein belongs to the calycin superfamily. Lipocalin family. Expressed in the vagina, uterus, and Bartholin's glands of female hamsters. Secreted in vaginal discharge.

The protein resides in the secreted. Its function is as follows. Acts as an aphrodisiac pheromone, reliably eliciting copulatory behavior from male hamster. This Cricetus cricetus (Black-bellied hamster) protein is Aphrodisin.